We begin with the raw amino-acid sequence, 438 residues long: Serine/threonine exchanger SteT (438 aa).

The Cytoplasmic portion of the chain corresponds to 1 to 11 (MHTEDNGLKKE). The helical transmembrane segment at 12–32 (IGLLFALTLVIGTIIGSGVFM) threads the bilayer. At 33–45 (KPGAVLAYSGDSK) the chain is on the extracellular side. Residues 46 to 66 (MALFAWLLGGILTLAGGLTIA) traverse the membrane as a helical segment. Residues 67 to 98 (EIGTQIPKTGGLYTYLEEVYGEFWGFLCGWVQ) are Cytoplasmic-facing. A helical membrane pass occupies residues 99 to 119 (IIIYGPAIIGALGLYFGSLMA). The Extracellular portion of the chain corresponds to 120–126 (NLFGWGS). Residues 127–147 (GLSKVIGIIAVLFLCVINIIG) form a helical membrane-spanning segment. The Cytoplasmic portion of the chain corresponds to 148 to 151 (TKYG). Residues 152-172 (GFVQTLTTIGKLIPIACIIVF) traverse the membrane as a helical segment. Topologically, residues 173-193 (GLWKGDQHIFTAVNESISDMN) are extracellular. Residues 194–214 (FGAAILATLFAYDGWILLAAL) form a helical membrane-spanning segment. Residues 215 to 230 (GGEMKNPEKLLPRAMT) lie on the Cytoplasmic side of the membrane. The chain crosses the membrane as a helical span at residues 231 to 251 (GGLLIVTAIYIFINFALLHIL). Residues 252–269 (SANEIVTLGENATSTAAT) lie on the Extracellular side of the membrane. A helical membrane pass occupies residues 270–290 (MLFGSIGGKLISVGIIVSIFG). Topologically, residues 291-327 (CLNGKVLSFPRVSFAMAERKQLPFAEKLSHVHPSFRT) are cytoplasmic. Residues 328–348 (PWIAISFQIALALIMMLISNP) traverse the membrane as a helical segment. Over 349–352 (DKLS) the chain is Extracellular. The chain crosses the membrane as a helical span at residues 353–373 (EISIFMIYIFYVMAFFAVFIL). At 374-388 (RKRAKGEKRAYSVPL) the chain is on the cytoplasmic side. The chain crosses the membrane as a helical span at residues 389-409 (YPFMPILAIAGSFFVLGSTLI). At 410–411 (TD) the chain is on the extracellular side. Residues 412–432 (TMSCGLSILIGLAGLPVYYGM) form a helical membrane-spanning segment. Residues 433-438 (KKRKAS) lie on the Cytoplasmic side of the membrane.

Belongs to the amino acid-polyamine-organocation (APC) superfamily. L-type amino acid transporter (LAT) (TC 2.A.3.8) family. In terms of assembly, monomer.

It is found in the cell membrane. Functionally, exhibits an obligate exchange activity for serine, threonine and aromatic amino acids. The protein is Serine/threonine exchanger SteT (steT) of Bacillus subtilis (strain 168).